The primary structure comprises 283 residues: Rhomboid-like protease 2 (283 aa).

Over residues 1-11 (MANIRTLSDYA) the composition is skewed to polar residues. Positions 1-26 (MANIRTLSDYASSPPRGSSALEGEVG) are disordered. The next 3 membrane-spanning stretches (helical) occupy residues 62-82 (IIII…AGLA), 114-134 (ICPL…WVQI), and 149-169 (LLAV…AVLF). The Nucleophile role is filled by Ser-178. 4 consecutive transmembrane segments (helical) span residues 179-199 (TAVF…WHAI), 205-225 (AIIS…GSHM), 227-247 (SVGH…LNEN), and 260-280 (LTSQ…IFLV). His-230 is a catalytic residue.

The protein belongs to the peptidase S54 family.

It localises to the membrane. The catalysed reaction is Cleaves type-1 transmembrane domains using a catalytic dyad composed of serine and histidine that are contributed by different transmembrane domains.. Serine protease involved in intramembrane proteolysis and the subsequent release of polypeptides from their membrane anchors. The chain is Rhomboid-like protease 2 (ROM2) from Toxoplasma gondii.